The sequence spans 361 residues: Histidinol-phosphate aminotransferase (361 aa).

Position 218 is an N6-(pyridoxal phosphate)lysine (Lys-218).

This sequence belongs to the class-II pyridoxal-phosphate-dependent aminotransferase family. Histidinol-phosphate aminotransferase subfamily. As to quaternary structure, homodimer. Pyridoxal 5'-phosphate serves as cofactor.

The catalysed reaction is L-histidinol phosphate + 2-oxoglutarate = 3-(imidazol-4-yl)-2-oxopropyl phosphate + L-glutamate. The protein operates within amino-acid biosynthesis; L-histidine biosynthesis; L-histidine from 5-phospho-alpha-D-ribose 1-diphosphate: step 7/9. The protein is Histidinol-phosphate aminotransferase of Ruegeria pomeroyi (strain ATCC 700808 / DSM 15171 / DSS-3) (Silicibacter pomeroyi).